A 770-amino-acid chain; its full sequence is Protein PAT1 homolog 1 (770 aa).

Positions 1–42 (MFRYESLEDCPLDEDEDAFQGLGEEDEEIDQFNDDTFGSGAV) are disordered. Positions 1 to 84 (MFRYESLEDC…EMDLLGDHEE (84 aa)) are region A; interaction with DDX6/RCK. Residues 1–397 (MFRYESLEDC…HQSSHQDHLR (397 aa)) form an involved in nuclear foci localization region. Acidic residues predominate over residues 7–33 (LEDCPLDEDEDAFQGLGEEDEEIDQFN). The segment at 85–388 (NLAERLSKMV…LNGTGDRGGH (304 aa)) is region N; interaction with decapping machinery. The short motif at 86–95 (LAERLSKMVI) is the Nuclear export signal element. The tract at residues 155–195 (PQRPLQGPEDDRDLSERALPRRSTSPIIGSPPVRAVPIGTP) is disordered. Phosphoserine is present on Ser177. The residue at position 178 (Thr178) is a Phosphothreonine. 2 positions are modified to phosphoserine: Ser179 and Ser184. A Phosphothreonine modification is found at Thr194. Asymmetric dimethylarginine occurs at positions 217, 223, and 263. Positions 223-397 (RYPAPYGERI…HQSSHQDHLR (175 aa)) are involved in RNA-binding. Ser278 bears the Phosphoserine mark. Asymmetric dimethylarginine is present on Arg284. 2 disordered regions span residues 319 to 340 (FSAP…GPHL) and 376 to 396 (HRNL…QDHL). Positions 321–337 (APPPATPPPQQHPPGPG) are enriched in pro residues. Arg385 carries the omega-N-methylarginine modification. Positions 385-396 (RGGHQSSHQDHL) are enriched in basic and acidic residues. The tract at residues 389–448 (QSSHQDHLRKDPYANLMLQREKDWVSKIQMMQLQSTDPYLDDFYYQNYFEKLEKLSAAEE) is region H. The involved in nuclear speckle localization stretch occupies residues 398–770 (KDPYANLMLQ…TKLQLVQGIR (373 aa)). The segment at 449–770 (IQGDGPKKER…TKLQLVQGIR (322 aa)) is region C.

Belongs to the PAT1 family. Interacts (via region A) with DDX6/RCK. Interacts (via region H and region C) with LSM1 and LSM4. Interacts (via region N) with DCP1A, DCP2, EDC3, EDC4 and XRN1. Interacts with the CCR4-NOT complex. Interacts with the Lsm-containing SMN-Sm protein complex. Interacts with EIF4ENIF1/4E-T.

The protein localises to the cytoplasm. The protein resides in the P-body. Its subcellular location is the nucleus. It is found in the PML body. It localises to the nucleus speckle. In terms of biological role, RNA-binding protein involved in deadenylation-dependent decapping of mRNAs, leading to the degradation of mRNAs. Acts as a scaffold protein that connects deadenylation and decapping machinery. Required for cytoplasmic mRNA processing body (P-body) assembly. This chain is Protein PAT1 homolog 1 (Patl1), found in Mus musculus (Mouse).